The following is a 1001-amino-acid chain: MEAAHAKTTEECLAYFGVSETTGLTPDQVKRNLEKYGLNELPAEEGKTLWELVIEQFEDLLVRILLLAACISFVLAWFEEGEETITAFVEPFVILLILIANAIVGVWQERNAENAIEALKEYEPEMGKVYRADRKSVQRIKARDIVPGDIVEVAVGDKVPADIRILAIKSTTLRVDQSILTGESVSVIKHTEPVPDPRAVNQDKKNMLFSGTNIAAGKALGIVATTGVGTEIGKIRDQMAATEQDKTPLQQKLDEFGEQLSKVISLICVAVWLINIGHFNDPVHGGSWFRGAIYYFKIAVALAVAAIPEGLPAVITTCLALGTRRMAKKNAIVRSLPSVETLGCTSVICSDKTGTLTTNQMSVCKMFIIDKVDGDICLLNEFSITGSTYAPEGEVLKNDKPVRPGQYDGLVELATICALCNDSSLDFNEAKGVYEKVGEATETALTTLVEKMNVFNTDVRSLSKVERANACNSVIRQLMKKEFTLEFSRDRKSMSVYCSPAKSSRAAVGNKMFVKGAPEGVIDRCNYVRVGTTRVPLTGPVKEKIMAVIKEWGTGRDTLRCLALATRDTPPKREEMVLDDSARFLEYETDLTFVGVVGMLDPPRKEVTGSIQLCRDAGIRVIMITGDNKGTAIAICRRIGIFGENEEVADRAYTGREFDDLPLAEQREACRRACCFARVEPSHKSKIVEYLQSYDEITAMTGDGVNDAPALKKAEIGIAMGSGTAVAKTASEMVLADDNFSTIVAAVEEGRAIYNNMKQFIRYLISSNVGEVVCIFLTAALGLPEALIPVQLLWVNLVTDGLPATALGFNPPDLDIMDRPPRSPKEPLISGWLFFRYMAIGGYVGAATVGAAAWWFLYAEDGPHVNYSQLTHFMQCTEDNTHFEGIDCEVFEAPEPMTMALSVLVTIEMCNALNSLSENQSLLRMPPWVNIWLLGSICLSMSLHFLILYVDPLPMIFKLRALDLTQWLMVLKISLPVIGLDEILKFVARNYLEDPEDERRK.

4 helical membrane passes run 49–69 (LWEL…LLAA), 90–110 (EPFV…WQER), 254–273 (DEFG…AVWL), and 296–313 (FKIA…GLPA). Valine 304, alanine 305, isoleucine 307, and glutamate 309 together coordinate Ca(2+). The active-site 4-aspartylphosphate intermediate is the aspartate 351. Mg(2+) contacts are provided by aspartate 351 and threonine 353. Threonine 353 serves as a coordination point for ATP. Threonine 441 is subject to Phosphothreonine. 4 residues coordinate ATP: glutamate 442, arginine 489, lysine 515, and arginine 560. The residue at position 569 (threonine 569) is a Phosphothreonine. Serine 581 is subject to Phosphoserine. Residues threonine 625, glycine 626, aspartate 627, arginine 678, and lysine 684 each coordinate ATP. Mg(2+) is bound at residue aspartate 703. Asparagine 706 lines the ATP pocket. 3 helical membrane-spanning segments follow: residues 758–777 (KQFI…CIFL), 788–808 (IPVQ…TALG), and 829–851 (ISGW…TVGA). Ca(2+) contacts are provided by asparagine 768, glutamate 771, asparagine 796, threonine 799, and aspartate 800. The tract at residues 788–808 (IPVQLLWVNLVTDGLPATALG) is interaction with PLN. A disulfide bridge links cysteine 876 with cysteine 888. 3 helical membrane-spanning segments follow: residues 898–917 (TMAL…NSLS), 931–949 (IWLL…LILY), and 965–985 (TQWL…EILK). Residue glutamate 908 coordinates Ca(2+). The interval 932–943 (WLLGSICLSMSL) is interaction with PLN.

The protein belongs to the cation transport ATPase (P-type) (TC 3.A.3) family. Type IIA subfamily. As to quaternary structure, interacts with sarcolipin (SLN). Interacts with phospholamban (PLN). Interacts with myoregulin (MRLN). Interacts with DWORF. Interacts with VMP1. Requires Mg(2+) as cofactor. In terms of tissue distribution, skeletal muscle, fast twitch muscle (type II) fibers.

It localises to the endoplasmic reticulum membrane. It is found in the sarcoplasmic reticulum membrane. It carries out the reaction Ca(2+)(in) + ATP + H2O = Ca(2+)(out) + ADP + phosphate + H(+). Inhibited by sarcolipin (SLN) and myoregulin (MRLN). Has also been shown to be reversibly inhibited by phospholamban (PLN) at low calcium concentrations in vitro. Dephosphorylated PLN decreases the apparent affinity of the ATPase for calcium and this inhibition is regulated by the phosphorylation of PLN in vitro. Enhanced by DWORF; DWORF increases activity by displacing sarcolipin (SLN), phospholamban (PLN) and myoregulin (MRLN). Key regulator of striated muscle performance by acting as the major Ca(2+) ATPase responsible for the reuptake of cytosolic Ca(2+) into the sarcoplasmic reticulum. Catalyzes the hydrolysis of ATP coupled with the translocation of calcium from the cytosol to the sarcoplasmic reticulum lumen. Contributes to calcium sequestration involved in muscular excitation/contraction. This chain is Sarcoplasmic/endoplasmic reticulum calcium ATPase 1, found in Homo sapiens (Human).